The following is a 390-amino-acid chain: Lipid-A-disaccharide synthase (390 aa).

This sequence belongs to the LpxB family.

The enzyme catalyses a lipid X + a UDP-2-N,3-O-bis[(3R)-3-hydroxyacyl]-alpha-D-glucosamine = a lipid A disaccharide + UDP + H(+). It participates in bacterial outer membrane biogenesis; LPS lipid A biosynthesis. Its function is as follows. Condensation of UDP-2,3-diacylglucosamine and 2,3-diacylglucosamine-1-phosphate to form lipid A disaccharide, a precursor of lipid A, a phosphorylated glycolipid that anchors the lipopolysaccharide to the outer membrane of the cell. This is Lipid-A-disaccharide synthase from Rickettsia felis (strain ATCC VR-1525 / URRWXCal2) (Rickettsia azadi).